Here is a 385-residue protein sequence, read N- to C-terminus: uncharacterized protein (385 aa).

Zn(2+) is bound by residues aspartate 180, histidine 258, and histidine 275.

This sequence belongs to the iron-containing alcohol dehydrogenase family. Requires Zn(2+) as cofactor.

This is an uncharacterized protein from Synechocystis sp. (strain ATCC 27184 / PCC 6803 / Kazusa).